A 340-amino-acid chain; its full sequence is Armadillo repeat-containing protein 12 (340 aa).

Positions 1–101 are interaction with TBC1D15; sequence MGKSIPQYLG…SITRCVYLLE (101 aa). 3 ARM repeats span residues 100 to 139, 179 to 218, and 278 to 318; these read LEAEASACTTDDIVLLGYMLDDKDNSVKTQALNTLKAFSG, LPDYVHPQLRRVMPALMEILQSDYILAQVQAVRLLSYLAQ, and SLHE…SLQY.

As to quaternary structure, interacts with TBC1D15, TBC1D21, GK2 and IMMT. Interacts with VDAC2 and VDAC3 in a TBC1D21-dependent manner. Interacts (via ARM domains) with RBBP4. In terms of tissue distribution, expressed in testis. Highly expressed in the mid-piece of the elongated and late spermatids. Expressed at higher levels in neuroblastoma tissues and cell lines, than those of normal dorsal ganglia (at protein level). Expressed in breast cancer, colon cancer, hepatocellular carcinoma, lung cancer, pancreas cancer, prostate cancer, renal cancer and gastric cancer, but not in their normal counterparts.

The protein resides in the nucleus. Its subcellular location is the mitochondrion outer membrane. Functionally, essential for male fertility and sperm mitochondrial sheath formation. Required for proper mitochondrial elongation and coiling along the flagellum during the formation of the mitochondrial sheath. Facilitates the growth and aggressiveness of neuroblastoma cells. Increases the EZH2 activity and H3K27me3 levels in a RBBP4-dependent manner, and facilitates the enrichment of polycomb repressive complex 2 and H3K27me3 on gene promoters, resulting in transcriptional repression of tumor suppressors affecting the proliferation, invasion, and metastasis of tumor cells. This chain is Armadillo repeat-containing protein 12 (ARMC12), found in Homo sapiens (Human).